The following is a 380-amino-acid chain: Protein phosphatase methylesterase 1 (380 aa).

The segment at 1 to 38 (MSALEKSMHLGRLPSRPPLPGSGGSQSGAKMRMGPGRK) is disordered. Serine 15 is modified (phosphoserine). Arginine 16 bears the Asymmetric dimethylarginine; alternate mark. Arginine 16 is subject to Omega-N-methylarginine; alternate. Serine 42 carries the post-translational modification Phosphoserine. Active-site residues include serine 156 and aspartate 181. Acidic residues predominate over residues 255–265 (IEEEEEDEEGS). Residues 255–280 (IEEEEEDEEGSESVNKRKKEDDMETK) are disordered. A compositionally biased stretch (basic and acidic residues) spans 268–280 (VNKRKKEDDMETK). Histidine 349 is a catalytic residue.

This sequence belongs to the AB hydrolase superfamily. As to quaternary structure, binds PPP2CA and PPP2CB. In terms of processing, phosphorylated by SIK1 following increases in intracellular sodium, leading to dissociation from the protein phosphatase 2A (PP2A) complex and subsequent dephosphorylation of sodium/potassium-transporting ATPase ATP1A1.

The catalysed reaction is [phosphatase 2A protein]-C-terminal L-leucine methyl ester + H2O = [phosphatase 2A protein]-C-terminal L-leucine + methanol + H(+). Its function is as follows. Demethylates proteins that have been reversibly carboxymethylated. Demethylates PPP2CB (in vitro) and PPP2CA. Binding to PPP2CA displaces the manganese ion and inactivates the enzyme. This chain is Protein phosphatase methylesterase 1 (PPME1), found in Bos taurus (Bovine).